We begin with the raw amino-acid sequence, 488 residues long: Proline--tRNA ligase (488 aa).

Belongs to the class-II aminoacyl-tRNA synthetase family. ProS type 3 subfamily. In terms of assembly, homodimer.

The protein localises to the cytoplasm. The catalysed reaction is tRNA(Pro) + L-proline + ATP = L-prolyl-tRNA(Pro) + AMP + diphosphate. Catalyzes the attachment of proline to tRNA(Pro) in a two-step reaction: proline is first activated by ATP to form Pro-AMP and then transferred to the acceptor end of tRNA(Pro). The sequence is that of Proline--tRNA ligase from Borreliella burgdorferi (strain ZS7) (Borrelia burgdorferi).